The chain runs to 139 residues: GSK3-beta interaction protein (139 aa).

Residues 1–22 (METDCNPMELSSMSGFEEGSEL) are disordered. A required for PRKAR2A interaction; contributes to a protective effect against H(2)O(2)-induced apoptosis region spans residues 41 to 45 (VNDVL). An interaction with GSK3B and acts as a GSK3B inhibitor region spans residues 115 to 139 (SPAYREAFGNALLQRLEALKRDGQS).

It belongs to the GSKIP family. As to quaternary structure, forms a complex composed of PRKAR2A or PRKAR2B, GSK3B and GSKIP through GSKIP interaction; facilitates PKA-induced phosphorylation of GSK3B leading to GSK3B inactivation; recruits DNM1L through GSK3B for PKA-mediated phosphorylation of DNM1L; promotes beta-catenin degradation through GSK3B-induced phosphorylation of beta-catenin; stabilizes beta-catenin and enhances Wnt-induced signaling through PKA-induced phosphorylation of beta-catenin. Interacts with GSK3B; induces GSK3B-mediated phosphorylation of GSKIP and inhibits GSK3B kinase activity. Phosphorylated by GSK3B.

Its subcellular location is the cytoplasm. It localises to the nucleus. Its function is as follows. A-kinase anchoring protein for GSK3B and PKA that regulates or facilitates their kinase activity towards their targets. The ternary complex enhances Wnt-induced signaling by facilitating the GSK3B- and PKA-induced phosphorylation of beta-catenin leading to beta-catenin degradation and stabilization respectively. Upon cAMP activation, the ternary complex contributes to neuroprotection against oxidative stress-induced apoptosis by facilitating the PKA-induced phosphorylation of DML1 and PKA-induced inactivation of GSK3B. During neurite outgrowth promotes neuron proliferation; while increases beta-catenin-induced transcriptional activity through GSK3B kinase activity inhibition, reduces N-cadherin level to promote cell cycle progression. May play a role in cleft palate formation and is required for postnatal life through modulation of the activity of GSK3B during development. The chain is GSK3-beta interaction protein from Macaca fascicularis (Crab-eating macaque).